A 347-amino-acid chain; its full sequence is Elongation factor Ts (347 aa).

An involved in Mg(2+) ion dislocation from EF-Tu region spans residues 80–83 (TDFV).

The protein belongs to the EF-Ts family.

The protein resides in the cytoplasm. Functionally, associates with the EF-Tu.GDP complex and induces the exchange of GDP to GTP. It remains bound to the aminoacyl-tRNA.EF-Tu.GTP complex up to the GTP hydrolysis stage on the ribosome. This is Elongation factor Ts from Streptococcus sanguinis (strain SK36).